A 688-amino-acid polypeptide reads, in one-letter code: MSIDEAVARYRDVIGNLATGNLRRIVIQSEKLAQIIASSKGTVRFHHKTRSGKTVIYKCIKKALLSSVASLSSEFSSETDVQQFLHLNYIYQSHFQALSGQINKYCGMKKYYELKFAAIDYLETEVQTTGLTLSRFWVASLDEFIKKERWPDNGSNFQIFYKLMAEYSSWKWDSDDKRQLQFMYEFRMKLKECLVKFYENFDLQKSSDPLKELIIPWEKIVYVANCIDAFTGEQVRIDGAELIWTSKNLVFSSISSAVLRLNDLQNMFSAFRPYGEEALVQDFAHIRSLKWDSNDKVESLIRALIFNDMFPYFNKEQVDTKADGIFFLRLLRKNFKEHINDVKDFHIQVIKYLNSQFKNNYSTLMTSSKTQDRRKSHNMPSSILDDGNKIGMHVSPIDEYSHFIDNDEPLWRDKVYPKIYTNEQTPTPDASAIFDSHKIYAIISLLRYYLPEKRKFFRIYYLPSIFKRILYYGAKFAQLYFMEGCLERLVIESLQILEPSLVHAINNLIKSSIESLKNVTVTSDDKTSSGVIILSYKEFKSLSEVNKDFNEPFWPNQSIANSWPDFANKQLKRGQILQDAFAFHLFEIELPIIIDTTRNTHLKLVSNMCTTSILYLYNEVDSLSLTSIQEKLAVLPTSKRNEILLYNLNRLTKLKLLLLKENEKGQKFYAFNFKYKRDGQKTSLIRLI.

This is an uncharacterized protein from Saccharomyces cerevisiae (strain ATCC 204508 / S288c) (Baker's yeast).